We begin with the raw amino-acid sequence, 363 residues long: Probable F-box protein At4g22165 (363 aa).

Positions 7–56 constitute an F-box domain; sequence PNTWSELPLDLLNLVFKRLSLVNFQRAKSVCSTRYSVSRQCVPERQIALL.

This is Probable F-box protein At4g22165 from Arabidopsis thaliana (Mouse-ear cress).